The following is a 62-amino-acid chain: Large ribosomal subunit protein uL30 (62 aa).

Belongs to the universal ribosomal protein uL30 family. In terms of assembly, part of the 50S ribosomal subunit.

The sequence is that of Large ribosomal subunit protein uL30 from Gluconobacter oxydans (strain 621H) (Gluconobacter suboxydans).